The chain runs to 135 residues: Retinol-binding protein 1 (135 aa).

The segment at 22 to 32 is important for interaction with STRA6; sequence RALDVNVALRK. All-trans-retinol contacts are provided by K41, M63, and Q109.

It belongs to the calycin superfamily. Fatty-acid binding protein (FABP) family. Interacts (only as retinol-free apoprotein) with STRA6.

The protein resides in the cytoplasm. It localises to the lipid droplet. Functionally, cytoplasmic retinol-binding protein. Accepts retinol from the transport protein STRA6, and thereby contributes to retinol uptake, storage and retinoid homeostasis. This chain is Retinol-binding protein 1 (Rbp1), found in Rattus norvegicus (Rat).